Consider the following 210-residue polypeptide: LexA repressor (210 aa).

Positions 30–50 form a DNA-binding region, H-T-H motif; the sequence is RVEIAREIGFKSPNAAEEHLK. Active-site for autocatalytic cleavage activity residues include Ser-127 and Lys-164.

The protein belongs to the peptidase S24 family. As to quaternary structure, homodimer.

It carries out the reaction Hydrolysis of Ala-|-Gly bond in repressor LexA.. In terms of biological role, represses a number of genes involved in the response to DNA damage (SOS response), including recA and lexA. In the presence of single-stranded DNA, RecA interacts with LexA causing an autocatalytic cleavage which disrupts the DNA-binding part of LexA, leading to derepression of the SOS regulon and eventually DNA repair. The polypeptide is LexA repressor (Actinobacillus pleuropneumoniae serotype 5b (strain L20)).